A 456-amino-acid chain; its full sequence is RuvB-like helicase 1 (456 aa).

70–77 lines the ATP pocket; that stretch reads GPPGTGKT.

It belongs to the RuvB family. As to quaternary structure, forms homohexameric rings. May form a dodecamer with rept made of two stacked hexameric rings. Component of the chromatin remodeling Ino80 complex.

Its subcellular location is the nucleus. The enzyme catalyses ATP + H2O = ADP + phosphate + H(+). In terms of biological role, acts as a transcriptional coactivator in Wg signaling. Functionally, proposed core component of the chromatin remodeling Ino80 complex which is involved in transcriptional regulation, DNA replication and probably DNA repair. The sequence is that of RuvB-like helicase 1 from Aedes aegypti (Yellowfever mosquito).